The sequence spans 159 residues: Large ribosomal subunit protein uL11 (159 aa).

This sequence belongs to the universal ribosomal protein uL11 family. In terms of assembly, part of the ribosomal stalk of the 50S ribosomal subunit. Interacts with L10 and the large rRNA to form the base of the stalk. L10 forms an elongated spine to which L12 dimers bind in a sequential fashion forming a multimeric L10(L12)X complex.

Forms part of the ribosomal stalk which helps the ribosome interact with GTP-bound translation factors. The polypeptide is Large ribosomal subunit protein uL11 (Methanothrix thermoacetophila (strain DSM 6194 / JCM 14653 / NBRC 101360 / PT) (Methanosaeta thermophila)).